The chain runs to 37 residues: Large ribosomal subunit protein bL36c (37 aa).

This sequence belongs to the bacterial ribosomal protein bL36 family.

The protein localises to the plastid. The protein resides in the cyanelle. The polypeptide is Large ribosomal subunit protein bL36c (rpl36) (Cyanophora paradoxa).